The primary structure comprises 169 residues: MSAIPEGSNVTVLNKNEKKAREMISKLGLKKIAGINRVTFRKKDNQIFAIDNPEVYRSQGGNYVVFGEAKIDNFSQKLAAAQEKIQSVSKSPEEIQKDMQLAADQAGDESAKPAAAAEEDDEAPVDAGDLSAEDIELVASQANVSKNKAIKALKEHNGDIVNAIMALSK.

The region spanning 14-78 (NKNEKKAREM…AKIDNFSQKL (65 aa)) is the NAC-A/B domain. The disordered stretch occupies residues 85 to 128 (IQSVSKSPEEIQKDMQLAADQAGDESAKPAAAAEEDDEAPVDAG). The UBA domain maps to 130 to 169 (LSAEDIELVASQANVSKNKAIKALKEHNGDIVNAIMALSK).

Belongs to the NAC-alpha family. In terms of assembly, part of the nascent polypeptide-associated complex (NAC), consisting of EGD2 and EGD1. NAC associates with ribosomes via EGD1.

It is found in the cytoplasm. The protein resides in the nucleus. Its function is as follows. Component of the nascent polypeptide-associated complex (NAC), a dynamic component of the ribosomal exit tunnel, protecting the emerging polypeptides from interaction with other cytoplasmic proteins to ensure appropriate nascent protein targeting. The NAC complex also promotes mitochondrial protein import by enhancing productive ribosome interactions with the outer mitochondrial membrane and blocks the inappropriate interaction of ribosomes translating non-secretory nascent polypeptides with translocation sites in the membrane of the endoplasmic reticulum. EGD2 may also be involved in transcription regulation. The protein is Nascent polypeptide-associated complex subunit alpha (EGD2) of Vanderwaltozyma polyspora (strain ATCC 22028 / DSM 70294 / BCRC 21397 / CBS 2163 / NBRC 10782 / NRRL Y-8283 / UCD 57-17) (Kluyveromyces polysporus).